The sequence spans 367 residues: Small ribosomal subunit biogenesis GTPase RsgA (367 aa).

Positions 112 to 267 (AEQVLATNVD…VIDTPGLREL (156 aa)) constitute a CP-type G domain. Residues 157-160 (NKSD) and 209-217 (GSSGAGKST) each bind GTP. Positions 291, 296, 298, and 304 each coordinate Zn(2+).

It belongs to the TRAFAC class YlqF/YawG GTPase family. RsgA subfamily. In terms of assembly, monomer. Associates with 30S ribosomal subunit, binds 16S rRNA. Zn(2+) is required as a cofactor.

The protein resides in the cytoplasm. In terms of biological role, one of several proteins that assist in the late maturation steps of the functional core of the 30S ribosomal subunit. Helps release RbfA from mature subunits. May play a role in the assembly of ribosomal proteins into the subunit. Circularly permuted GTPase that catalyzes slow GTP hydrolysis, GTPase activity is stimulated by the 30S ribosomal subunit. This Opitutus terrae (strain DSM 11246 / JCM 15787 / PB90-1) protein is Small ribosomal subunit biogenesis GTPase RsgA.